The primary structure comprises 247 residues: 2,3-bisphosphoglycerate-dependent phosphoglycerate mutase (247 aa).

Substrate is bound by residues 8–15 (RHGESVWN), 21–22 (TG), Arg-60, 87–90 (ERHY), Lys-98, 114–115 (RR), and 183–184 (GN). Catalysis depends on His-9, which acts as the Tele-phosphohistidine intermediate. The active-site Proton donor/acceptor is Glu-87.

This sequence belongs to the phosphoglycerate mutase family. BPG-dependent PGAM subfamily. Homodimer.

The catalysed reaction is (2R)-2-phosphoglycerate = (2R)-3-phosphoglycerate. It functions in the pathway carbohydrate degradation; glycolysis; pyruvate from D-glyceraldehyde 3-phosphate: step 3/5. Catalyzes the interconversion of 2-phosphoglycerate and 3-phosphoglycerate. The protein is 2,3-bisphosphoglycerate-dependent phosphoglycerate mutase of Geobacter sulfurreducens (strain ATCC 51573 / DSM 12127 / PCA).